A 96-amino-acid chain; its full sequence is Co-chaperonin GroES (96 aa).

The protein belongs to the GroES chaperonin family. As to quaternary structure, heptamer of 7 subunits arranged in a ring. Interacts with the chaperonin GroEL.

It localises to the cytoplasm. Together with the chaperonin GroEL, plays an essential role in assisting protein folding. The GroEL-GroES system forms a nano-cage that allows encapsulation of the non-native substrate proteins and provides a physical environment optimized to promote and accelerate protein folding. GroES binds to the apical surface of the GroEL ring, thereby capping the opening of the GroEL channel. The chain is Co-chaperonin GroES from Cupriavidus necator (strain ATCC 17699 / DSM 428 / KCTC 22496 / NCIMB 10442 / H16 / Stanier 337) (Ralstonia eutropha).